The sequence spans 982 residues: E3 ubiquitin-protein ligase CBL-B (982 aa).

A 4H region spans residues 35–167 (PPKQAAADRR…KAIFPNGQFQ (133 aa)). The Cbl-PTB domain maps to 35-343 (PPKQAAADRR…GRSYNPDLTG (309 aa)). The tract at residues 168 to 240 (GDNFRITKAD…FEFDIFTRLF (73 aa)) is EF-hand-like. Positions 221, 223, 225, 227, and 232 each coordinate Ca(2+). The tract at residues 241–343 (QPWGSILRNW…GRSYNPDLTG (103 aa)) is SH2-like. Position 282 is a phosphoserine; by PKC/PRKCQ (Ser282). Arg286 contacts 4-O-phospho-L-tyrosine. Positions 344–372 (LCEPTPHDHIKVTQEQYELYCEMGSTFQL) are linker. Tyr363 carries the post-translational modification Phosphotyrosine. An RING-type zinc finger spans residues 373-412 (CKICAENDKDVKIEPCGHLMCTSCLTAWQESDGQGCPFCR). Residues 465-588 (ASVRKCTDRQ…SVPSRDQPMP (124 aa)) are disordered. Positions 473 to 486 (RQNSPVTSPGSSPL) are enriched in polar residues. Phosphoserine is present on residues Ser476, Ser480, Ser484, Ser521, Ser525, and Ser529. The tract at residues 543 to 567 (PLPAPPPPLRDPPPPPERPPPIPPD) is interaction with VAV1. The segment covering 544–566 (LPAPPPPLRDPPPPPERPPPIPP) has biased composition (pro residues). Ser633 is subject to Phosphoserine. A phosphotyrosine mark is found at Tyr664 and Tyr708. 2 disordered regions span residues 702–723 (EDDD…SQPS) and 745–929 (THGA…EAAL). Residues 714–723 (HPVSLNSQPS) show a composition bias toward polar residues. Residues 819–828 (PSLPPPPPPA) are compositionally biased toward pro residues. Low complexity predominate over residues 838 to 848 (PPGSSSRPSSG). The segment covering 884-899 (RASQDYDQLPSSSDGS) has biased composition (polar residues). Tyr889 is subject to Phosphotyrosine. An interaction with SH3KBP1 region spans residues 891-927 (QLPSSSDGSQAPARPPKPRPRRTAPEIHHRKPHGPEA). The span at 906–922 (PKPRPRRTAPEIHHRKP) shows a compositional bias: basic residues. In terms of domain architecture, UBA spans 931–970 (NVDAKIAKLMGEGYAFEEVKRALEIAQNNVEVARSILREF).

Interacts with SH3 domain-containing proteins LCK, CRK and SORBS1. Interacts with LCP2 and ZAP70. Interacts with CBL. Interacts with SH3 domain-containing proteins VAV1, FYN, FGR, PLCG1, GRB2, CRKL, PIK3R1 and SH3KBP1/CIN85. Identified in heterotrimeric complexes with SH3KBP1/CIN85, CD2AP and ARHGEF7, where one CBLB peptide binds two copies of the other protein. Interacts with poly-ubiquitinated proteins. Dimerization is required for the binding of poly-ubiquitin, but not for the binding of mono-ubiquitin. Interacts with EGFR (phosphorylated). Interacts with IFT20. Phosphorylated on tyrosine and serine residues upon TCR or BCR activation. Phosphorylated on Tyr-664 and Tyr-708 in adipocytes following insulin stimulation. Post-translationally, auto-ubiquitinated upon EGF-mediated cell activation or upon T-cell costimulation by CD28; which promotes proteasomal degradation.

Its subcellular location is the cytoplasm. The catalysed reaction is S-ubiquitinyl-[E2 ubiquitin-conjugating enzyme]-L-cysteine + [acceptor protein]-L-lysine = [E2 ubiquitin-conjugating enzyme]-L-cysteine + N(6)-ubiquitinyl-[acceptor protein]-L-lysine.. It participates in protein modification; protein ubiquitination. Its function is as follows. E3 ubiquitin-protein ligase which accepts ubiquitin from specific E2 ubiquitin-conjugating enzymes, and transfers it to substrates, generally promoting their degradation by the proteasome. Negatively regulates TCR (T-cell receptor), BCR (B-cell receptor) and FCER1 (high affinity immunoglobulin epsilon receptor) signal transduction pathways. In naive T-cells, inhibits VAV1 activation upon TCR engagement and imposes a requirement for CD28 costimulation for proliferation and IL-2 production. Also acts by promoting PIK3R1/p85 ubiquitination, which impairs its recruitment to the TCR and subsequent activation. In activated T-cells, inhibits PLCG1 activation and calcium mobilization upon restimulation and promotes anergy. In B-cells, acts by ubiquitinating SYK and promoting its proteasomal degradation. Slightly promotes SRC ubiquitination. May be involved in EGFR ubiquitination and internalization. May be functionally coupled with the E2 ubiquitin-protein ligase UB2D3. In association with CBL, required for proper feedback inhibition of ciliary platelet-derived growth factor receptor-alpha (PDGFRA) signaling pathway via ubiquitination and internalization of PDGFRA. This chain is E3 ubiquitin-protein ligase CBL-B (Cblb), found in Mus musculus (Mouse).